Consider the following 442-residue polypeptide: 3-phosphoshikimate 1-carboxyvinyltransferase (442 aa).

3-phosphoshikimate is bound by residues lysine 25, serine 26, and arginine 30. Lysine 25 contributes to the phosphoenolpyruvate binding site. Phosphoenolpyruvate-binding residues include glycine 96 and arginine 124. Residues serine 171, serine 172, glutamine 173, serine 203, aspartate 325, and lysine 352 each contribute to the 3-phosphoshikimate site. Phosphoenolpyruvate is bound at residue glutamine 173. Aspartate 325 functions as the Proton acceptor in the catalytic mechanism. Phosphoenolpyruvate contacts are provided by arginine 356, arginine 400, and lysine 425.

Belongs to the EPSP synthase family. As to quaternary structure, monomer.

The protein localises to the cytoplasm. The enzyme catalyses 3-phosphoshikimate + phosphoenolpyruvate = 5-O-(1-carboxyvinyl)-3-phosphoshikimate + phosphate. It participates in metabolic intermediate biosynthesis; chorismate biosynthesis; chorismate from D-erythrose 4-phosphate and phosphoenolpyruvate: step 6/7. In terms of biological role, catalyzes the transfer of the enolpyruvyl moiety of phosphoenolpyruvate (PEP) to the 5-hydroxyl of shikimate-3-phosphate (S3P) to produce enolpyruvyl shikimate-3-phosphate and inorganic phosphate. The protein is 3-phosphoshikimate 1-carboxyvinyltransferase of Bordetella bronchiseptica (strain ATCC BAA-588 / NCTC 13252 / RB50) (Alcaligenes bronchisepticus).